A 315-amino-acid polypeptide reads, in one-letter code: Olfactory receptor 56A3 (315 aa).

Residues 1-29 are Extracellular-facing; that stretch reads MTTHRNDTLSTEASDFLLNCFVRSPSWQH. N6 is a glycosylation site (N-linked (GlcNAc...) asparagine). Residues 30 to 50 traverse the membrane as a helical segment; the sequence is WLSLPLSLLFLLAVGANTTLL. Residues 51 to 58 are Cytoplasmic-facing; sequence MTIWLEAS. A helical transmembrane segment spans residues 59-79; it reads LHQPLYYLLSLLSLLDIVLCL. Topologically, residues 80–103 are extracellular; that stretch reads TVIPKVLTIFWFDLRPISFPACFL. C101 and C193 are joined by a disulfide. The chain crosses the membrane as a helical span at residues 104–124; that stretch reads QMYIMNCFLAMESCTFMVMAY. The Cytoplasmic segment spans residues 125 to 143; that stretch reads DRYVAICHPLRYPSIITDH. A helical membrane pass occupies residues 144 to 164; sequence FVVKAAMFILTRNVLMTLPIP. Topologically, residues 165-200 are extracellular; that stretch reads ILSAQLRYCGRNVIENCICANMSVSRLSCDDVTINH. N185 is a glycosylation site (N-linked (GlcNAc...) asparagine). A helical transmembrane segment spans residues 201 to 221; it reads LYQFAGGWTLLGSDLILIFLS. The Cytoplasmic portion of the chain corresponds to 222–241; it reads YTFILRAVLRLKAEGAVAKA. Residues 242-262 traverse the membrane as a helical segment; it reads LSTCGSHFMLILFFSTILLVF. The Extracellular portion of the chain corresponds to 263–277; sequence VLTHVAKKKVSPDVP. Residues 278-298 form a helical membrane-spanning segment; that stretch reads VLLNVLHHVIPAALNPIIYGV. The Cytoplasmic segment spans residues 299–315; the sequence is RTQEIKQGMQRLLKKGC.

This sequence belongs to the G-protein coupled receptor 1 family.

Its subcellular location is the cell membrane. Odorant receptor. The polypeptide is Olfactory receptor 56A3 (OR56A3) (Homo sapiens (Human)).